The chain runs to 319 residues: uncharacterized protein (319 aa).

Residues 268–312 (SSVVAVTHPPSTTSTTTSVSETLSSFIAPSDLSSQPSPSSHPSSP) show a composition bias toward low complexity. Residues 268–319 (SSVVAVTHPPSTTSTTTSVSETLSSFIAPSDLSSQPSPSSHPSSPFGNHNEF) are disordered.

This is an uncharacterized protein from Lepidoptera (butterflies and moths).